A 457-amino-acid polypeptide reads, in one-letter code: Vasoactive intestinal polypeptide receptor 1 (457 aa).

An N-terminal signal peptide occupies residues 1–30; it reads MRPPSPLPARWLCVLAGALAWALGPAGGQA. Residues 31–141 lie on the Extracellular side of the membrane; that stretch reads ARLQEECDYV…DEQQTMFYGS (111 aa). 5 cysteine pairs are disulfide-bonded: Cys-37–Cys-208, Cys-50–Cys-72, Cys-63–Cys-105, Cys-86–Cys-122, and Cys-215–Cys-285. Asn-58, Asn-69, and Asn-100 each carry an N-linked (GlcNAc...) asparagine glycan. A helical transmembrane segment spans residues 142–166; it reads VKTGYTIGYGLSLATLLVATAILSL. Residues 167 to 174 lie on the Cytoplasmic side of the membrane; sequence FRKLHCTR. A helical transmembrane segment spans residues 175–196; the sequence is NYIHMHLFISFILRAAAVFIKD. At 197–216 the chain is on the extracellular side; the sequence is LALFDSGESDQCSEGSVGCK. A helical transmembrane segment spans residues 217-241; the sequence is AAMVFFQYCVMANFFWLLVEGLYLY. Over 242–254 the chain is Cytoplasmic; the sequence is TLLAVSFFSERKY. A helical transmembrane segment spans residues 255 to 276; that stretch reads FWGYILIGWGVPSTFTMVWTIA. At 277 to 291 the chain is on the extracellular side; that stretch reads RIHFEDYGCWDTINS. The N-linked (GlcNAc...) asparagine glycan is linked to Asn-290. Residues 292-316 traverse the membrane as a helical segment; the sequence is SLWWIIKGPILTSILVNFILFICII. The Cytoplasmic portion of the chain corresponds to 317-338; it reads RILLQKLRPPDIRKSDSSPYSR. The helical transmembrane segment at 339 to 359 threads the bilayer; the sequence is LARSTLLLIPLFGVHYIMFAF. Topologically, residues 360-367 are extracellular; that stretch reads FPDNFKPE. The chain crosses the membrane as a helical span at residues 368–391; that stretch reads VKMVFELVVGSFQGFVVAILYCFL. Topologically, residues 392–457 are cytoplasmic; that stretch reads NGEVQAELRR…SSFQAEVSLV (66 aa).

Belongs to the G-protein coupled receptor 2 family. In terms of assembly, interacts with ADCYAP1/PACAP; activated by both PACAP27 and PACAP38 neuropeptides. Interacts with VIP; the interaction results in VIPR1 activation. In terms of tissue distribution, in lung, HT-29 colonic epithelial cells, Raji B-lymphoblasts. Lesser extent in brain, heart, kidney, liver and placenta. Not expressed in CD4+ or CD8+ T-cells. Expressed in the T-cell lines HARRIS, HuT 78, Jurkat and SUP-T1, but not in the T-cell lines Peer, MOLT-4, HSB and YT.

It localises to the cell membrane. Its function is as follows. G protein-coupled receptor activated by the neuropeptides vasoactive intestinal peptide (VIP) and pituitary adenylate cyclase-activating polypeptide (ADCYAP1/PACAP). Binds VIP and both PACAP27 and PACAP38 bioactive peptides with the following order of ligand affinity VIP = PACAP27 &gt; PACAP38. Ligand binding causes a conformation change that triggers signaling via guanine nucleotide-binding proteins (G proteins) and modulates the activity of downstream effectors. Activates cAMP-dependent pathway. The polypeptide is Vasoactive intestinal polypeptide receptor 1 (Homo sapiens (Human)).